The chain runs to 89 residues: Small ribosomal subunit protein uS15 (89 aa).

Belongs to the universal ribosomal protein uS15 family. Part of the 30S ribosomal subunit. Forms a bridge to the 50S subunit in the 70S ribosome, contacting the 23S rRNA.

Functionally, one of the primary rRNA binding proteins, it binds directly to 16S rRNA where it helps nucleate assembly of the platform of the 30S subunit by binding and bridging several RNA helices of the 16S rRNA. In terms of biological role, forms an intersubunit bridge (bridge B4) with the 23S rRNA of the 50S subunit in the ribosome. In Gluconobacter oxydans (strain 621H) (Gluconobacter suboxydans), this protein is Small ribosomal subunit protein uS15.